Here is a 178-residue protein sequence, read N- to C-terminus: Large ribosomal subunit protein uL6 (178 aa).

It belongs to the universal ribosomal protein uL6 family. Part of the 50S ribosomal subunit.

Its function is as follows. This protein binds to the 23S rRNA, and is important in its secondary structure. It is located near the subunit interface in the base of the L7/L12 stalk, and near the tRNA binding site of the peptidyltransferase center. This is Large ribosomal subunit protein uL6 from Lactococcus lactis subsp. lactis (strain IL1403) (Streptococcus lactis).